The sequence spans 244 residues: Venom nerve growth factor 3 (244 aa).

Positions 1 to 18 (MSMLCYTLIIAFLIGIWA) are cleaved as a signal peptide. A propeptide spanning residues 19–125 (APKSEDNVPL…TLNRNIRAKR (107 aa)) is cleaved from the precursor. Residues 47–66 (GLKTSRNTDQRHPAPKKAED) are compositionally biased toward basic and acidic residues. The disordered stretch occupies residues 47–67 (GLKTSRNTDQRHPAPKKAEDQ). 3 disulfide bridges follow: C139–C205, C181–C233, and C193–C235.

Belongs to the NGF-beta family. In terms of assembly, homodimer; non-covalently linked. As to expression, expressed by the venom gland.

Its subcellular location is the secreted. In terms of biological role, nerve growth factor is important for the development and maintenance of the sympathetic and sensory nervous systems. It stimulates division and differentiation of sympathetic and embryonic sensory neurons as well as basal forebrain cholinergic neurons in the brain. Its relevance in the snake venom is not clear. However, it has been shown to inhibit metalloproteinase-dependent proteolysis of platelet glycoprotein Ib alpha, suggesting a metalloproteinase inhibition to prevent metalloprotease autodigestion and/or protection against prey proteases. Binds a lipid between the two protein chains in the homodimer. The lipid-bound form promotes histamine relase from mouse mast cells, contrary to the lipid-free form. In Notechis scutatus scutatus (Mainland tiger snake), this protein is Venom nerve growth factor 3.